Reading from the N-terminus, the 183-residue chain is ATP synthase subunit b, chloroplastic (183 aa).

A helical membrane pass occupies residues 27–49 (LATNLINLTVVVGVLIFFGKGVL).

The protein belongs to the ATPase B chain family. As to quaternary structure, F-type ATPases have 2 components, F(1) - the catalytic core - and F(0) - the membrane proton channel. F(1) has five subunits: alpha(3), beta(3), gamma(1), delta(1), epsilon(1). F(0) has four main subunits: a(1), b(1), b'(1) and c(10-14). The alpha and beta chains form an alternating ring which encloses part of the gamma chain. F(1) is attached to F(0) by a central stalk formed by the gamma and epsilon chains, while a peripheral stalk is formed by the delta, b and b' chains.

The protein localises to the plastid. Its subcellular location is the chloroplast thylakoid membrane. F(1)F(0) ATP synthase produces ATP from ADP in the presence of a proton or sodium gradient. F-type ATPases consist of two structural domains, F(1) containing the extramembraneous catalytic core and F(0) containing the membrane proton channel, linked together by a central stalk and a peripheral stalk. During catalysis, ATP synthesis in the catalytic domain of F(1) is coupled via a rotary mechanism of the central stalk subunits to proton translocation. Its function is as follows. Component of the F(0) channel, it forms part of the peripheral stalk, linking F(1) to F(0). In Brachypodium distachyon (Purple false brome), this protein is ATP synthase subunit b, chloroplastic.